Here is a 445-residue protein sequence, read N- to C-terminus: ATP-dependent protease ATPase subunit HslU (445 aa).

ATP is bound by residues I17, 59–64, D254, E319, and R391; that span reads GVGKTE.

Belongs to the ClpX chaperone family. HslU subfamily. In terms of assembly, a double ring-shaped homohexamer of HslV is capped on each side by a ring-shaped HslU homohexamer. The assembly of the HslU/HslV complex is dependent on binding of ATP.

It is found in the cytoplasm. ATPase subunit of a proteasome-like degradation complex; this subunit has chaperone activity. The binding of ATP and its subsequent hydrolysis by HslU are essential for unfolding of protein substrates subsequently hydrolyzed by HslV. HslU recognizes the N-terminal part of its protein substrates and unfolds these before they are guided to HslV for hydrolysis. This chain is ATP-dependent protease ATPase subunit HslU, found in Pseudomonas fluorescens (strain Pf0-1).